A 506-amino-acid polypeptide reads, in one-letter code: Bifunctional purine biosynthesis protein PurH (506 aa).

An MGS-like domain is found at 1–146 (MARLALLSVS…KNFAHLTVLC (146 aa)).

It belongs to the PurH family.

It catalyses the reaction (6R)-10-formyltetrahydrofolate + 5-amino-1-(5-phospho-beta-D-ribosyl)imidazole-4-carboxamide = 5-formamido-1-(5-phospho-D-ribosyl)imidazole-4-carboxamide + (6S)-5,6,7,8-tetrahydrofolate. The enzyme catalyses IMP + H2O = 5-formamido-1-(5-phospho-D-ribosyl)imidazole-4-carboxamide. It functions in the pathway purine metabolism; IMP biosynthesis via de novo pathway; 5-formamido-1-(5-phospho-D-ribosyl)imidazole-4-carboxamide from 5-amino-1-(5-phospho-D-ribosyl)imidazole-4-carboxamide (10-formyl THF route): step 1/1. It participates in purine metabolism; IMP biosynthesis via de novo pathway; IMP from 5-formamido-1-(5-phospho-D-ribosyl)imidazole-4-carboxamide: step 1/1. This is Bifunctional purine biosynthesis protein PurH from Trichormus variabilis (strain ATCC 29413 / PCC 7937) (Anabaena variabilis).